The chain runs to 183 residues: uncharacterized protein (183 aa).

This is an uncharacterized protein from Saccharomyces cerevisiae (strain ATCC 204508 / S288c) (Baker's yeast).